Reading from the N-terminus, the 88-residue chain is Alkene monooxygenase system, oxygenase component subunit gamma (88 aa).

It belongs to the TmoB/XamoB family. The alkene monooxygenase multicomponent enzyme system is composed of an electron transfer component and a monooxygenase component interacting with the effector protein XamoD. The electron transfer component is composed of a ferredoxin reductase (XamoF) and a ferredoxin (XamoC), and the monooxygenase component is formed by a heterohexamer (dimer of heterotrimers) of two alpha subunits (XamoA), two beta subunits (XamoE) and two gamma subunits (XamoB).

Its subcellular location is the cytoplasm. It carries out the reaction propene + NADH + O2 + H(+) = 1,2-epoxypropane + NAD(+) + H2O. With respect to regulation, inhibited by propyne. In terms of biological role, component of the alkene monooxygenase multicomponent enzyme system which catalyzes the O2- and NADH-dependent epoxidation of short chain (C2 to C6) alkenes to their corresponding epoxides. Also able to catalyze the oxidation of a number of chlorinated alkenes, including trichloroethylene, cis- and trans-1,2-dichloroethylene, vinyl chloride, 1-chloropropylene, 1,3-dichloropropylene and 2,3-dichloropropylene. In Xanthobacter autotrophicus (strain ATCC BAA-1158 / Py2), this protein is Alkene monooxygenase system, oxygenase component subunit gamma.